Reading from the N-terminus, the 265-residue chain is 5'-nucleotidase SurE (265 aa).

Residues Asp-8, Asp-9, Ser-39, and Asn-96 each contribute to the a divalent metal cation site.

This sequence belongs to the SurE nucleotidase family. The cofactor is a divalent metal cation.

The protein localises to the cytoplasm. It catalyses the reaction a ribonucleoside 5'-phosphate + H2O = a ribonucleoside + phosphate. Nucleotidase that shows phosphatase activity on nucleoside 5'-monophosphates. The polypeptide is 5'-nucleotidase SurE (Dehalococcoides mccartyi (strain ATCC BAA-2266 / KCTC 15142 / 195) (Dehalococcoides ethenogenes (strain 195))).